The chain runs to 272 residues: uncharacterized protein (272 aa).

NAD(+) is bound by residues 12–34, 39–40, 77–78, and N104; these read FITG…DGAN, DI, and DV. S153 contributes to the substrate binding site. Residue Y170 is the Proton acceptor of the active site. Residues K174 and 203 to 205 each bind NAD(+); that span reads VDT.

It belongs to the short-chain dehydrogenases/reductases (SDR) family.

This is an uncharacterized protein from Mycobacterium tuberculosis (strain CDC 1551 / Oshkosh).